Consider the following 406-residue polypeptide: Secretion apparatus protein BsaZ (406 aa).

Helical transmembrane passes span 28–48, 80–100, 137–157, and 175–195; these read IVALIVIATGALAAPALVDLT, IAAPFVLLCAAAGALPSLVQS, ALLYVGVFALTVRVFAGLYHA, and IVLTVRLVLLFLLCALPVLIL. A disordered region spans residues 341–406; that stretch reads AANRGGPPPE…APARTGDQNA (66 aa). Positions 370–399 are enriched in low complexity; it reads DACADNAFPDDAPPGAAAPNAGSPDGGAPA.

Belongs to the type III secretion exporter family.

The protein localises to the cell membrane. In terms of biological role, part of the bsa type III secretion system, is involved in the intracellular replication of invading bacteria inside the host cell. Probably necessary for the lysis of the vacuole membrane and escape into the host cell cytoplasm. The polypeptide is Secretion apparatus protein BsaZ (bsaZ) (Burkholderia pseudomallei (strain 668)).